Here is a 486-residue protein sequence, read N- to C-terminus: 2-succinylbenzoate--CoA ligase (486 aa).

It belongs to the ATP-dependent AMP-binding enzyme family. MenE subfamily.

It catalyses the reaction 2-succinylbenzoate + ATP + CoA = 2-succinylbenzoyl-CoA + AMP + diphosphate. The protein operates within quinol/quinone metabolism; 1,4-dihydroxy-2-naphthoate biosynthesis; 1,4-dihydroxy-2-naphthoate from chorismate: step 5/7. Its pathway is quinol/quinone metabolism; menaquinone biosynthesis. Converts 2-succinylbenzoate (OSB) to 2-succinylbenzoyl-CoA (OSB-CoA). In Bacillus pumilus (strain SAFR-032), this protein is 2-succinylbenzoate--CoA ligase.